The primary structure comprises 434 residues: Beta-enolase (434 aa).

Alanine 2 carries the N-acetylalanine modification. Threonine 72 bears the Phosphothreonine mark. A phosphoserine mark is found at serine 83 and serine 157. The substrate site is built by histidine 158 and glutamate 167. Serine 176 is modified (phosphoserine). Residue threonine 205 is modified to Phosphothreonine. Glutamate 210 serves as the catalytic Proton donor. Threonine 229 carries the phosphothreonine modification. Phosphotyrosine is present on tyrosine 236. Residue aspartate 245 participates in Mg(2+) binding. Serine 263 carries the post-translational modification Phosphoserine. Residues glutamate 293 and aspartate 318 each contribute to the substrate site. Positions 293 and 318 each coordinate Mg(2+). The active-site Proton acceptor is lysine 343. Residues 370–373 (SHRS) and lysine 394 each bind substrate.

Belongs to the enolase family. Mammalian enolase is composed of 3 isozyme subunits, alpha, beta and gamma, which can form homodimers or heterodimers which are cell-type and development-specific. Interacts with PNKD. Mg(2+) is required as a cofactor. In terms of tissue distribution, the alpha/alpha homodimer is expressed in embryo and in most adult tissues. The alpha/beta heterodimer and the beta/beta homodimer are found in striated muscle, and the alpha/gamma heterodimer and the gamma/gamma homodimer in neurons.

The protein localises to the cytoplasm. It carries out the reaction (2R)-2-phosphoglycerate = phosphoenolpyruvate + H2O. Its pathway is carbohydrate degradation; glycolysis; pyruvate from D-glyceraldehyde 3-phosphate: step 4/5. Its function is as follows. Glycolytic enzyme that catalyzes the conversion of 2-phosphoglycerate to phosphoenolpyruvate. Appears to have a function in striated muscle development and regeneration. The protein is Beta-enolase (ENO3) of Homo sapiens (Human).